Reading from the N-terminus, the 475-residue chain is ESX-3 secretion system protein EccD3 (475 aa).

A run of 11 helical transmembrane segments spans residues 132-152, 161-181, 186-206, 212-232, 241-261, 264-284, 333-353, 354-374, 384-404, 409-429, and 453-473; these read IARG…GLSV, LLGQ…ALAV, AVLA…AFAL, FGAP…LISM, IAVF…AGAA, WVIS…IVTV, GVIA…VSSA, NASP…ALRA, AWLL…FVIG, AALW…VAAL, and GLDA…SLVL.

Belongs to the EccD/Snm4 family. Part of the ESX-3 / type VII secretion system (T7SS), which is composed of cytosolic and membrane components. The ESX-3 membrane complex is composed of EccB3, EccC3, EccD3 and EccE3.

Its subcellular location is the cell inner membrane. Its function is as follows. Part of the ESX-3 specialized secretion system, which is required for siderophore-mediated iron acquisition and for the secretion of EsxH and EsxG. In Mycolicibacterium smegmatis (strain ATCC 700084 / mc(2)155) (Mycobacterium smegmatis), this protein is ESX-3 secretion system protein EccD3.